A 760-amino-acid polypeptide reads, in one-letter code: Penicillin-binding protein 1B (760 aa).

Residues 1 to 8 (MFFNFKKY) lie on the Cytoplasmic side of the membrane. The chain crosses the membrane as a helical; Signal-anchor for type II membrane protein span at residues 9-29 (FLIKVFFFVLILTLCYGLYLY). Over 30 to 760 (VKINRFINGK…NFLFWLKNLF (731 aa)) the chain is Extracellular. Residues 136-308 (FRLEPKLIAM…SLYSPWTNPN (173 aa)) are transglycosylase. Glu-174 acts as the Proton donor; for transglycosylase activity in catalysis. The tract at residues 392–684 (EQAVKIEIPI…SSGAMQIYKR (293 aa)) is transpeptidase. The Acyl-ester intermediate; for transpeptidase activity role is filled by Ser-451.

The protein in the N-terminal section; belongs to the glycosyltransferase 51 family. In the C-terminal section; belongs to the transpeptidase family.

The protein localises to the cell membrane. The catalysed reaction is [GlcNAc-(1-&gt;4)-Mur2Ac(oyl-L-Ala-gamma-D-Glu-L-Lys-D-Ala-D-Ala)](n)-di-trans,octa-cis-undecaprenyl diphosphate + beta-D-GlcNAc-(1-&gt;4)-Mur2Ac(oyl-L-Ala-gamma-D-Glu-L-Lys-D-Ala-D-Ala)-di-trans,octa-cis-undecaprenyl diphosphate = [GlcNAc-(1-&gt;4)-Mur2Ac(oyl-L-Ala-gamma-D-Glu-L-Lys-D-Ala-D-Ala)](n+1)-di-trans,octa-cis-undecaprenyl diphosphate + di-trans,octa-cis-undecaprenyl diphosphate + H(+). It catalyses the reaction Preferential cleavage: (Ac)2-L-Lys-D-Ala-|-D-Ala. Also transpeptidation of peptidyl-alanyl moieties that are N-acyl substituents of D-alanine.. It participates in cell wall biogenesis; peptidoglycan biosynthesis. Its function is as follows. Cell wall formation. Synthesis of cross-linked peptidoglycan from the lipid intermediates. The enzyme has a penicillin-insensitive transglycosylase N-terminal domain (formation of linear glycan strands) and a penicillin-sensitive transpeptidase C-terminal domain (cross-linking of the peptide subunits). This is Penicillin-binding protein 1B (mrcB) from Buchnera aphidicola subsp. Acyrthosiphon pisum (strain APS) (Acyrthosiphon pisum symbiotic bacterium).